A 385-amino-acid polypeptide reads, in one-letter code: Succinyl-diaminopimelate desuccinylase (385 aa).

A Zn(2+)-binding site is contributed by His78. Residue Asp80 is part of the active site. A Zn(2+)-binding site is contributed by Asp110. Residue Glu144 is the Proton acceptor of the active site. Zn(2+) is bound by residues Glu145, Glu173, and His358.

It belongs to the peptidase M20A family. DapE subfamily. Homodimer. Requires Zn(2+) as cofactor. The cofactor is Co(2+).

It carries out the reaction N-succinyl-(2S,6S)-2,6-diaminopimelate + H2O = (2S,6S)-2,6-diaminopimelate + succinate. It participates in amino-acid biosynthesis; L-lysine biosynthesis via DAP pathway; LL-2,6-diaminopimelate from (S)-tetrahydrodipicolinate (succinylase route): step 3/3. Its function is as follows. Catalyzes the hydrolysis of N-succinyl-L,L-diaminopimelic acid (SDAP), forming succinate and LL-2,6-diaminopimelate (DAP), an intermediate involved in the bacterial biosynthesis of lysine and meso-diaminopimelic acid, an essential component of bacterial cell walls. The chain is Succinyl-diaminopimelate desuccinylase from Gluconacetobacter diazotrophicus (strain ATCC 49037 / DSM 5601 / CCUG 37298 / CIP 103539 / LMG 7603 / PAl5).